The following is a 616-amino-acid chain: Dihydroxy-acid dehydratase (616 aa).

D81 is a binding site for Mg(2+). Position 122 (C122) interacts with [2Fe-2S] cluster. Residues D123 and K124 each contribute to the Mg(2+) site. N6-carboxylysine is present on K124. Residue C195 participates in [2Fe-2S] cluster binding. E491 contacts Mg(2+). S517 (proton acceptor) is an active-site residue.

The protein belongs to the IlvD/Edd family. In terms of assembly, homodimer. The cofactor is [2Fe-2S] cluster. Mg(2+) is required as a cofactor.

It catalyses the reaction (2R)-2,3-dihydroxy-3-methylbutanoate = 3-methyl-2-oxobutanoate + H2O. It carries out the reaction (2R,3R)-2,3-dihydroxy-3-methylpentanoate = (S)-3-methyl-2-oxopentanoate + H2O. Its pathway is amino-acid biosynthesis; L-isoleucine biosynthesis; L-isoleucine from 2-oxobutanoate: step 3/4. It participates in amino-acid biosynthesis; L-valine biosynthesis; L-valine from pyruvate: step 3/4. Its function is as follows. Functions in the biosynthesis of branched-chain amino acids. Catalyzes the dehydration of (2R,3R)-2,3-dihydroxy-3-methylpentanoate (2,3-dihydroxy-3-methylvalerate) into 2-oxo-3-methylpentanoate (2-oxo-3-methylvalerate) and of (2R)-2,3-dihydroxy-3-methylbutanoate (2,3-dihydroxyisovalerate) into 2-oxo-3-methylbutanoate (2-oxoisovalerate), the penultimate precursor to L-isoleucine and L-valine, respectively. The polypeptide is Dihydroxy-acid dehydratase (Pectobacterium atrosepticum (strain SCRI 1043 / ATCC BAA-672) (Erwinia carotovora subsp. atroseptica)).